A 385-amino-acid polypeptide reads, in one-letter code: METKRVEIPGSVLDDLCSRFILHIPSEERDNAIRVCFQIELAHWFYLDFYMQNTPGLSQCGIRDFAKAVFSHCPFLLPEGEDVEKVLDEWKEYKMGVPTYGAIILDETLENVLLVQGYLAKSGWGFPKGKVNKEEAPHDCAAREVFEETGFDIKDYICKDDYIELRINDQLARLYIIPGIPKDTKFNPKTRREIRNIEWFSIEKLPCHRNDMTPKSKLGLAPNKFFMAIPFIRPLRDWLSRRFGDSSDSDNGFSSTGSTPAKPTVEKLSRTKFRHSQQLFPDGSPGDQWVKHRQPLQQKPYNNHSEMSDLLKGKKCEKKLHPRKLQDNFETDAVYDLPSSNEDQLLEHAEGQPVACNGHCKFPFSSRAFLSFKFDHNAIMKILDL.

Residues 95 to 226 (MGVPTYGAII…KLGLAPNKFF (132 aa)) form the Nudix hydrolase domain. The Nudix box motif lies at 129–150 (GKVNKEEAPHDCAAREVFEETG). The Mn(2+) site is built by Glu-144 and Glu-148. 5 positions are modified to phosphoserine: Ser-246, Ser-247, Ser-249, Ser-276, and Ser-284. Positions 247–266 (SDSDNGFSSTGSTPAKPTVE) are disordered. Over residues 249-259 (SDNGFSSTGST) the composition is skewed to low complexity.

This sequence belongs to the Nudix hydrolase family. DCP2 subfamily. In terms of assembly, found in a mRNA decay complex with LSM1, LSM3, LSM4, EXOSC2, EXOSC4, EXOSC10, PARN, XRN1, CNOT6, UPF1, UPF2 and UPF3B. Forms a complex with DCP1A, EDC3, DDX6 and EDC4/HEDLS, within this complex directly interacts with EDC4/HEDLS. Interacts with DPC1B, UPF1, UPF2 and UPF3B. Associates with polysomes. Interacts (via N-terminus and C-terminus) with TRIM21 (via N-terminus and C-terminus). Interacts with LIMD1, WTIP and AJUBA. Interacts with DDX17 in an RNA-dependent manner. Interacts with ZC3HAV1. Interacts with APOBEC3G in an RNA-dependent manner. Interacts with ZFP36L1 (via N-terminus). Interacts with NBDY. Requires Mn(2+) as cofactor. Mg(2+) serves as cofactor.

Its subcellular location is the cytoplasm. The protein resides in the P-body. It localises to the nucleus. It catalyses the reaction a 5'-end (N(7)-methyl 5'-triphosphoguanosine)-ribonucleoside in mRNA + H2O = N(7)-methyl-GDP + a 5'-end phospho-ribonucleoside in mRNA + 2 H(+). Decapping metalloenzyme that catalyzes the cleavage of the cap structure on mRNAs. Removes the 7-methyl guanine cap structure from mRNA molecules, yielding a 5'-phosphorylated mRNA fragment and 7m-GDP. Necessary for the degradation of mRNAs, both in normal mRNA turnover and in nonsense-mediated mRNA decay. Plays a role in replication-dependent histone mRNA degradation. Has higher activity towards mRNAs that lack a poly(A) tail. Has no activity towards a cap structure lacking an RNA moiety. The presence of a N(6)-methyladenosine methylation at the second transcribed position of mRNAs (N(6),2'-O-dimethyladenosine cap; m6A(m)) provides resistance to DCP2-mediated decapping. Blocks autophagy in nutrient-rich conditions by repressing the expression of ATG-related genes through degradation of their transcripts. In Pongo abelii (Sumatran orangutan), this protein is m7GpppN-mRNA hydrolase (DCP2).